Consider the following 64-residue polypeptide: Alpha-toxin Amm5 (64 aa).

Residues 2 to 64 form the LCN-type CS-alpha/beta domain; that stretch reads KDGYIIDDLN…VSIKEKGRCN (63 aa). Cystine bridges form between Cys-12-Cys-63, Cys-16-Cys-36, Cys-22-Cys-46, and Cys-26-Cys-48. Asn-64 bears the Asparagine amide mark.

In terms of tissue distribution, expressed by the venom gland.

Its subcellular location is the secreted. In terms of biological role, alpha toxins bind voltage-independently at site-3 of sodium channels (Nav) and inhibit the inactivation of the activated channels, thereby blocking neuronal transmission. This is Alpha-toxin Amm5 from Androctonus mauritanicus mauritanicus (Scorpion).